We begin with the raw amino-acid sequence, 339 residues long: N-acetyl-gamma-glutamyl-phosphate reductase (339 aa).

Cys-145 is a catalytic residue.

It belongs to the NAGSA dehydrogenase family. Type 1 subfamily.

The protein resides in the cytoplasm. It catalyses the reaction N-acetyl-L-glutamate 5-semialdehyde + phosphate + NADP(+) = N-acetyl-L-glutamyl 5-phosphate + NADPH + H(+). Its pathway is amino-acid biosynthesis; L-arginine biosynthesis; N(2)-acetyl-L-ornithine from L-glutamate: step 3/4. Its function is as follows. Catalyzes the NADPH-dependent reduction of N-acetyl-5-glutamyl phosphate to yield N-acetyl-L-glutamate 5-semialdehyde. The chain is N-acetyl-gamma-glutamyl-phosphate reductase from Thermotoga maritima (strain ATCC 43589 / DSM 3109 / JCM 10099 / NBRC 100826 / MSB8).